The sequence spans 153 residues: Ribosome maturation factor RimP (153 aa).

This sequence belongs to the RimP family.

Its subcellular location is the cytoplasm. Required for maturation of 30S ribosomal subunits. The chain is Ribosome maturation factor RimP from Rippkaea orientalis (strain PCC 8801 / RF-1) (Cyanothece sp. (strain PCC 8801)).